Here is a 241-residue protein sequence, read N- to C-terminus: ATP synthase subunit a (241 aa).

Transmembrane regions (helical) follow at residues 30–50, 91–111, 128–148, 193–213, and 214–234; these read GQVFLTSWILLGALLVFISLG, FIGTLFLFVFVSNWGGALIPW, INTTIALALLVSLSYFYAGLS, LVVGVLVFLVPLILPIPVMFL, and GLFTSAIQALIFATLAAYYIG.

The protein belongs to the ATPase A chain family. F-type ATPases have 2 components, CF(1) - the catalytic core - and CF(0) - the membrane proton channel. CF(1) has five subunits: alpha(3), beta(3), gamma(1), delta(1), epsilon(1). CF(0) has four main subunits: a, b, b' and c.

It is found in the cellular thylakoid membrane. Its function is as follows. Key component of the proton channel; it plays a direct role in the translocation of protons across the membrane. This Prochlorococcus marinus (strain MIT 9312) protein is ATP synthase subunit a.